Consider the following 840-residue polypeptide: Translation initiation factor IF-2 (840 aa).

The segment at 1–251 (MTEEKKFSSS…GPAVPATERK (251 aa)) is disordered. Polar residues-rich tracts occupy residues 38–50 (DGTNSSAGTTPRS) and 65–83 (NRHTNSSRSNTQGGNASRP). Low complexity predominate over residues 84-102 (NQSKSQGQGGRNNQRPGSR). Composition is skewed to basic and acidic residues over residues 110–135 (PMIREKKNWSTKPREGQIDYSKKTDN) and 158–168 (KPAEQSKKAAE). A compositionally biased stretch (low complexity) spans 169–207 (KPAQTKPKTAETKTTATTTQSGTGKFGGALASGNNSARN). The span at 230 to 239 (GSKKSRRIAA) shows a compositional bias: basic residues. The region spanning 341–510 (ARPPVVTIMG…LLQAEVLELK (170 aa)) is the tr-type G domain. The G1 stretch occupies residues 350–357 (GHVDHGKT). 350–357 (GHVDHGKT) contributes to the GTP binding site. Positions 375-379 (GITQH) are G2. The tract at residues 396–399 (DTPG) is G3. GTP is bound by residues 396-400 (DTPGH) and 450-453 (NKID). The segment at 450–453 (NKID) is G4. The G5 stretch occupies residues 486 to 488 (SAK).

The protein belongs to the TRAFAC class translation factor GTPase superfamily. Classic translation factor GTPase family. IF-2 subfamily.

The protein resides in the cytoplasm. Its function is as follows. One of the essential components for the initiation of protein synthesis. Protects formylmethionyl-tRNA from spontaneous hydrolysis and promotes its binding to the 30S ribosomal subunits. Also involved in the hydrolysis of GTP during the formation of the 70S ribosomal complex. This chain is Translation initiation factor IF-2, found in Leuconostoc citreum (strain KM20).